The sequence spans 443 residues: Ribosomal protein uS12 methylthiotransferase RimO (443 aa).

One can recognise an MTTase N-terminal domain in the interval 8–118 (PKVGFVSLGC…VVNAVHEVVP (111 aa)). 6 residues coordinate [4Fe-4S] cluster: Cys-17, Cys-53, Cys-82, Cys-151, Cys-155, and Cys-158. The region spanning 137–375 (LTPRHYAYLK…MAHQQAISTA (239 aa)) is the Radical SAM core domain. Residues 378–443 (QLRIGKEIEV…DEYDMWAEPI (66 aa)) form the TRAM domain.

It belongs to the methylthiotransferase family. RimO subfamily. [4Fe-4S] cluster serves as cofactor.

The protein localises to the cytoplasm. It carries out the reaction L-aspartate(89)-[ribosomal protein uS12]-hydrogen + (sulfur carrier)-SH + AH2 + 2 S-adenosyl-L-methionine = 3-methylsulfanyl-L-aspartate(89)-[ribosomal protein uS12]-hydrogen + (sulfur carrier)-H + 5'-deoxyadenosine + L-methionine + A + S-adenosyl-L-homocysteine + 2 H(+). Its function is as follows. Catalyzes the methylthiolation of an aspartic acid residue of ribosomal protein uS12. The protein is Ribosomal protein uS12 methylthiotransferase RimO of Pseudomonas putida (strain GB-1).